A 212-amino-acid chain; its full sequence is Ribonuclease P protein component 3 (212 aa).

It belongs to the eukaryotic/archaeal RNase P protein component 3 family. In terms of assembly, consists of a catalytic RNA component and at least 4-5 protein subunits.

The protein localises to the cytoplasm. It carries out the reaction Endonucleolytic cleavage of RNA, removing 5'-extranucleotides from tRNA precursor.. In terms of biological role, part of ribonuclease P, a protein complex that generates mature tRNA molecules by cleaving their 5'-ends. This Pyrococcus abyssi (strain GE5 / Orsay) protein is Ribonuclease P protein component 3.